Consider the following 736-residue polypeptide: Elongation factor 2 (736 aa).

Positions 18 to 262 (TRVRNIGIIA…AVIKFVPNPV (245 aa)) constitute a tr-type G domain. GTP-binding positions include 27 to 34 (AHVDHGKT), 93 to 97 (DTPGH), and 147 to 150 (NKVD). Histidine 603 bears the Diphthamide mark.

Belongs to the TRAFAC class translation factor GTPase superfamily. Classic translation factor GTPase family. EF-G/EF-2 subfamily.

Its subcellular location is the cytoplasm. Its function is as follows. Catalyzes the GTP-dependent ribosomal translocation step during translation elongation. During this step, the ribosome changes from the pre-translocational (PRE) to the post-translocational (POST) state as the newly formed A-site-bound peptidyl-tRNA and P-site-bound deacylated tRNA move to the P and E sites, respectively. Catalyzes the coordinated movement of the two tRNA molecules, the mRNA and conformational changes in the ribosome. The chain is Elongation factor 2 from Metallosphaera sedula (strain ATCC 51363 / DSM 5348 / JCM 9185 / NBRC 15509 / TH2).